Reading from the N-terminus, the 2192-residue chain is MSNVLLLGDQTADQSPLLRKLVLRRNDALVTTFHEQVSVALRDEVSKLPARQRQDIPSFLKLNTLVDLYYQGDKRLPILESTFVALTQLGHYIGYFSENPDRLPYAANTRVLGLCTGSLAATVIVSAKSLSELVSLAVEAVRIAFRAGACVDAAKRVLQQPGEEKEPWSTIVMNLSEKDAQKALDEFHSSTGTSGPSRAYISAISTMAVTISGPPSTTQKLFSESADLSTKNRVSIPIYAPYHAAHLHSERDLQRIIPDSSRALLKKYQPHTLLHSSATGECLVADNTCDLMSLALVDFLREPVRWDRLLEESISQIIATPKAPAKIFTIGVSNVANSMAAALKASGQATVSITDHTSWIVPDDYNSTRGRTQNDKIAIVGMSGRFPSAASVDALWELLEKGLDVHRKIPADRFDADAHCDPSGKSKNKSHTPYGCFIDEPGLFDPRFFNMSPREAAQTDPMGRLALVTAYEALEESGYVPNRTPSTKLHRIGTFYGQTSDDWREINAAENVDTYFITGGVRAFAPGRINYYFKFSGPSFSIDTACSSSLAAIQLACTSLWAGDCDTACAGGLNVLTNPDIFSGLSKGQFLSKTGSCKTYDNDADGYCRGDGCGSVILKRYEDAIADKDNILGCILGAATNHSAEAVSITHPHAGNQEFLFKKVLAEAGVDAHEISYVEMHGTGTQAGDGIEMTSVTNAFAPPNRRRTPDEKLFLGAIKANVGHGEAASGINSLAKVLMMFKKNAIPANVGIKGVMNESFPKDLGERNVHIPLKQVEFPRNGDAPRKIFLNNFSAAGGNTSLLLEDGPVRKPSTVKDPRSTLPITVTARSIASLKRNIDNLKSYLSKTPEASLTSLSYTSTARRIQHNYRIAFPATDINKVSEALDAQIKDSYSPVAITATRVAFCFTGQGSQYTGLGQKLYQDLPSFKADIDQLNQLAESHNLPSFLELFDGTDVATLSPVKVQLGTACIQVALSRMWESWGIKPSAVIGHSLGEYAALHVAGVISASDMVYLVGRRAELLVKDCTPHTHGMLAVKASVDAIRNALGSKMTEVACINGPEETVLCGSSEIVTAANEVLTSKGMKSTKLNVPFAFHSAQVDPILESFRTTASSVSFKKPAVPVLSPLSGDIITDVGVIGPEYLAKHARETVNFSQALESGQKAKIFDGKTAWLEIGAHPVCLGMVKGSVETTATAPSLRRGEDAWKTLANSMCALFLAGVYINFDEYHRAFNDAQELLHLPTYSFDDKKYWLDYHNNWTLTKGEAPQPTKAIEAAPFEAAAPVERTYKKLSDSCQKIIDEEFSANAGRVLVQSDVCQPNLRRVAMGHQVNDTALCPSSLYFDMAMTVADYIYKALRPSAPKIGYNVAHMEVPKPFIIKNVAPPEGQHLQLEAHADLEEGVAKLVFRSVTPNGKQLVVHAHCTVKFEDINTWQEGWENISFMVKSQIENLQRKTRTQEAHVIGRGLAYKLFKVFVNYAKPYRGMEEIILDNQTTEATASVHFQTKPEDGEFFFPAYWCDSMAHLGGFIVNATDLCDSDNYVSVSHGWGSIKVAKEMSANKKYRNYVRMVEKPGNVTQGDVYIFDGDEIIAVVGALKFQKIPRKVLNTFLPPQKAGSAVSAPVAPPAAARPALKQAPRINTQAQPAKAVPKQVTVAAPTPKAAPKKADLKKPAGPTIITRVMHIIAAETDVDSSELVDQAAFENLGVDSLMSLTISARFREELDMDISSTLFTDFPTVGEMKKFFSQYDGEVGTPEQDDSDSDSETSGDASTPMSEVGTPMTIPSSAVSESGKFDLDTAAPASGEVSIARQIVATEMGVEIAEVTDQADLADMGMDSLMSLTILSELREKTGIDLPSTFLMTNPTIEDVENALDMRPKARVAPVAVPAPSNRRPSSPQLDKVNEKLNASRSADISKYPAATSVLLQGNPKIATKKIFFLPDGSGSATSYVSIPNIGSDVCAFGLNCPFMKSPEQWSCGIEICAMVYLKEIKRRKPTGPYIIGGWSAGGVIAYAVAQALLANNEEVEKLLLLDSPCPVNLDPLPARLHIFFNEIGLLGTGDPSKTPKWLLPHFSAAIRSLSDYQPQPTIKPVKTYAIWCREGVAGNPGDPRPPPAEDEDPAPMKWLLNHRTDFTDNGWGKLCGVENMKYGVMGGHHFSMMKPPHVSIFDYSIVDDEANMRQAEDLGQLIKEGLSM.

The interval 5–243 is N-terminal acylcarrier protein transacylase domain (SAT); sequence LLLGDQTADQ…VSIPIYAPYH (239 aa). The Ketosynthase family 3 (KS3) domain occupies 374-806; that stretch reads NDKIAIVGMS…GGNTSLLLED (433 aa). Catalysis depends on for beta-ketoacyl synthase activity residues cysteine 546, histidine 681, and histidine 724. Positions 905–1218 are malonyl-CoA:ACP transacylase (MAT) domain; the sequence is FCFTGQGSQY…ANSMCALFLA (314 aa). Catalysis depends on serine 993, which acts as the For acyl/malonyl transferase activity. Residues 1293-1610 are product template (PT) domain; sequence SCQKIIDEEF…RKVLNTFLPP (318 aa). Residues 1295–1430 form an N-terminal hotdog fold region; that stretch reads QKIIDEEFSA…CTVKFEDINT (136 aa). The 311-residue stretch at 1295–1605 folds into the PKS/mFAS DH domain; that stretch reads QKIIDEEFSA…FQKIPRKVLN (311 aa). Histidine 1327 (proton acceptor; for dehydratase activity) is an active-site residue. The tract at residues 1458-1605 is C-terminal hotdog fold; it reads AHVIGRGLAY…FQKIPRKVLN (148 aa). The active-site Proton donor; for dehydratase activity is the aspartate 1518. Residues 1639 to 1668 are disordered; the sequence is TQAQPAKAVPKQVTVAAPTPKAAPKKADLK. The Carrier 1 domain maps to 1670–1747; that stretch reads PAGPTIITRV…EMKKFFSQYD (78 aa). Serine 1707 bears the O-(pantetheine 4'-phosphoryl)serine mark. Residues 1748-1788 are disordered; the sequence is GEVGTPEQDDSDSDSETSGDASTPMSEVGTPMTIPSSAVSE. A compositionally biased stretch (acidic residues) spans 1754–1764; sequence EQDDSDSDSET. The 78-residue stretch at 1798-1875 folds into the Carrier 2 domain; it reads APASGEVSIA…DVENALDMRP (78 aa). Residue serine 1835 is modified to O-(pantetheine 4'-phosphoryl)serine. The tract at residues 1913–2164 is thioesterase (TE) domain; it reads SKYPAATSVL…SMMKPPHVSI (252 aa).

In terms of biological role, non-reducing polyketide synthase; part of the gene cluster that mediates the biosynthesis of elsinochromes, pigments consisting of at least four interconvertible tautomers (A, B, C and D) that have a core phenolic quinone to which various side chains are attached and which play an important role in fungal pathogenesis. The non-reducing polyketide synthase PKS1 was proposed to iteratively catalyze decarboxylation between acetyl-CoA and malonyl-CoA subunits for polyketide chain elongation. The released polyketide undergoes cyclization to form an aromatic ring, and proceeds via serial modification steps to produce the heptaketide back- bone of elsinochrome. As elsinochrome has a symmetrical structure, two identical heptaketides are fused to form a core 1,2-dihydrobenzo-perylene ring structure, which can then be successively modified to produce the various derivatives of elsinochrome. Some of these reactions may be cooperatively carried out, at least in part, by the products of RDT1, OXR1 and PKS1. PRF1, embedded within the elsinochrome cluster possibly functions to stabilize some of the biosynthetic enzymes required for elsinochrome production. As prefoldin is a hexamer containing 2 a and 4 b subunits, additional prefoldin subunits, whose coding genes may not immediately link to the elsinochrome biosynthetic gene cluster, are required to fulfill the chaperone function. In addition, no methyltransferase-coding gene exists within the biosynthetic gene cluster, even though elsinochrome has four methyl groups at positions C3, C7, C8 and C12. Apparently, the identified gene cluster does not contain the entire entourage of genes responsible for elsinochrome biosynthesis. Once elsinochrome is synthesized, it must be exported outside the fungal cells, which is probably accomplished by the ECT1 transporter, to avoid toxicity. The protein is Non-reducing polyketide synthase 1 of Elsinoe fawcettii (Citrus scab fungus).